The following is a 144-amino-acid chain: Large ribosomal subunit protein uL15 (144 aa).

Positions 1-57 (MELNNLKPAEGAKHAKRRVGRGIGSGLGKTAGRGHKGQKSRSGGFHKVGFEGGQMPL) are disordered. Residues 21-31 (RGIGSGLGKTA) show a composition bias toward gly residues.

The protein belongs to the universal ribosomal protein uL15 family. As to quaternary structure, part of the 50S ribosomal subunit.

Binds to the 23S rRNA. This chain is Large ribosomal subunit protein uL15, found in Paraburkholderia xenovorans (strain LB400).